Consider the following 188-residue polypeptide: Ribosome-recycling factor (188 aa).

This sequence belongs to the RRF family.

The protein localises to the cytoplasm. In terms of biological role, responsible for the release of ribosomes from messenger RNA at the termination of protein biosynthesis. May increase the efficiency of translation by recycling ribosomes from one round of translation to another. The sequence is that of Ribosome-recycling factor from Anaeromyxobacter dehalogenans (strain 2CP-C).